Here is a 152-residue protein sequence, read N- to C-terminus: Transcriptional regulator MraZ (152 aa).

SpoVT-AbrB domains lie at 5 to 52 and 81 to 124; these read ASAI…PLDE and AHEC…DEAA.

It belongs to the MraZ family. In terms of assembly, forms oligomers.

It is found in the cytoplasm. It localises to the nucleoid. The sequence is that of Transcriptional regulator MraZ from Shewanella violacea (strain JCM 10179 / CIP 106290 / LMG 19151 / DSS12).